Reading from the N-terminus, the 274-residue chain is Tryptase beta-2 (274 aa).

Residues 1-19 form the signal peptide; it reads MLKLLLLLALSPLASLVHA. Positions 20 to 29 are cleaved as a propeptide — activation peptide; sequence APCPVKQRVG. In terms of domain architecture, Peptidase S1 spans 30–271; sequence IVGGREASES…YLDWIHRYVP (242 aa). A disulfide bridge connects residues Cys-58 and Cys-74. His-73 (charge relay system) is an active-site residue. Tyr-96 carries the phosphotyrosine modification. The N-linked (GlcNAc...) asparagine glycan is linked to Asn-104. Asp-120 serves as the catalytic Charge relay system. A glycan (N-linked (GlcNAc...) asparagine) is linked at Asn-131. Intrachain disulfides connect Cys-154-Cys-229, Cys-187-Cys-210, and Cys-219-Cys-247. The active-site Charge relay system is the Ser-223.

The protein belongs to the peptidase S1 family. Tryptase subfamily. Homotetramer. The active tetramer is converted to inactive monomers at neutral and acidic pH in the absence of heparin. Low concentrations of inactive monomers become active monomers at pH 6.0 in the presence of heparin. When the concentration of active monomers is higher, they convert to active monomers and then to active tetramers. These monomers are active and functionally distinct from the tetrameric enzyme. In contrast to the hidden active sites in the tetrameric form, the active site of the monomeric form is accessible for macromolecular proteins and inhibitors, e.g. fibrinogen which is a substrate for the monomeric but not for the tetrameric form. The monomeric form forms a complex with SERPINB6.

The protein resides in the secreted. The catalysed reaction is Preferential cleavage: Arg-|-Xaa, Lys-|-Xaa, but with more restricted specificity than trypsin.. Tryptase is the major neutral protease present in mast cells and is secreted upon the coupled activation-degranulation response of this cell type. Plays a role in innate immunity. This Rattus norvegicus (Rat) protein is Tryptase beta-2 (Tpsb2).